Reading from the N-terminus, the 446-residue chain is Chromosomal replication initiator protein DnaA (446 aa).

Residues 1–82 form a domain I, interacts with DnaA modulators region; the sequence is MENILDLWNQ…ELSIKFVIPQ (82 aa). The segment at 83-103 is domain II; that stretch reads NQDVEDFMPKPQVKKAVKEDT. The segment at 104–332 is domain III, AAA+ region; it reads SDFPQNMLNP…VAYSSLINKD (229 aa). ATP-binding residues include Gly154, Leu155, Gly156, Lys157, and Thr158. Thr158 lines the Mg(2+) pocket. Positions 182–206 match the Initiator specific motif (ISM) motif; that stretch reads SEKFTNEFINSIRDNKAVDFRNRYR. Residues Asp214 and Asp215 each coordinate Mg(2+). The tract at residues 333 to 346 is linker; it reads INADLAAEALKDII. The tract at residues 347–446 is domain IV, binds dsDNA; that stretch reads PSSKPKVITI…HVKEIKEQLK (100 aa).

The protein belongs to the DnaA family. As to quaternary structure, the DNA replisome assembles sequentially on oriC in this order; DnaA, DnaD, DnaB, DnaI-DnaC helicase. Oligomerizes as a right-handed, spiral filament on DNA at oriC. Forms an ATP-dependent helix on DNA at oriC; both DnaD and YabA inhibit formation of the DnaA helix. Forms an ATP-dependent oligomer, formation is stimulated by ds- and ssDNA; monomeric ADP-Soj inhibits oligomer formation. Interacts with DnaD. Interacts with YabA, and via YabA, with the replication machinery subunit beta sliding clamp DnaN. Interacts with YabA via domain IIIa (residues 109-275). Isolated domain I forms a 1:1 complex with SirA. Interacts with Soj, probably via domain III. Interacts via domains I and III with CcrZ. Interacts via domain IV with skin prophage-like element protein YqaH.

Its subcellular location is the cytoplasm. The protein localises to the nucleoid. The catalysed reaction is ATP + H2O = ADP + phosphate + H(+). Its activity is regulated as follows. Oligomerization of DnaA can be controlled by Soj; monomeric ADP-Soj inhibits formation of the DnaA helix. YabA prevents the cooperative binding of DnaA-ATP to oriC-containing sequences; increased levels of DnaN (beta sliding clamp subunit of DNA polymerase) removes YabA from association with DnaA on the chromosome, enabling increased association of DnaA with its chromosomal binding sites. Both Soj and YabA chase DnaA from oriC site, YabA tethers DnaA to the DNA replication fork via the beta sliding clamp subunit DnaN. SirA antagonizes the ability of DnaA to bind to the replication origin, and thus decreases replication inititation during sporulation. Small protein YqaH, part of the skin prophage-like element, binds to DnaA and antagonizes its replication initiation and transcriptional regulation activities. Plays an essential role in the initiation and regulation of chromosomal replication. ATP-DnaA binds to the origin of replication (oriC) to initiate formation of the DNA replication initiation complex once per cell cycle. Binds directly to oriC at a 9 bp consensus (DnaA box): 5'-TTATCCACA-3' and separates the double-stranded (ds)DNA. Forms a right-handed helical filament on oriC DNA; dsDNA binds to the exterior of the filament while single-stranded (ss)DNA is stabilized in the filament's interior. The ATP-DnaA-oriC complex binds and stabilizes one strand of the AT-rich DNA unwinding element (DUE or basal unwinding system, BUS), permitting loading of DNA polymerase. Binds ATP with high affinity, ADP with lower affinity, but not AMP, cAMP or cGMP; ATP stimulates binding to DnaA boxes. Once bound promotes sequence-specific strand separation of DnaA-trios (3'-GAT-5' consensus) adjacent to oriC in the presence of ATP but not ADP. Domains III and IV are sufficient to separate dsDNA strands. The 'initiator specific motif' (ISM) of domain III contacts the middle adenine residue of the DnaA-trio probably stretching and stabilizing ssDNA. DnaA-trio recognition is co-operative and depends on DnaA self-assembly. The ssDNA serves as an assembly region for the replication machinery. Tethered to DnaN (beta sliding clamp subunit of DNA polymerase) and thus replication forks by YabA. During replication initiation DnaA-ATP binds cooperatively to sequences in oriC. YabA prevents this cooperative binding while still allowing DnaA to bind DNA. During the cell cycle an initial phase occurs in which DnaA is associated with origin regions, then the origin regions become spatially separate from the centrally sequestered DnaA molecules, and most DnaA molecules are unable to reassociate with origin regions. Does not require YabA to bind DNA. During sporulation SirA prevents DnaA association with the replication origin to prevent excessive chromosome replication. Overexpression induces the SOS response; increasing expression of downstream dnaN blocks this induction. Over-initiation of DNA replication is very deleterious; isolated suppressors in relA, ndrR, dnaC, cshA and crrZ increase replication elongation, decrease replication inititation or lead to a decrease in the replicative DNA helicase. Binds acidic phospholipids. Functionally, the half-life of ADP-DnaA is 1.5 minutes, of ATP-DnaA is 5 minutes at 37 degrees Celsius; in E.coli the half-life of ADP-DnaA is about 45 minutes. Its function is as follows. Also acts as a transcriptional regulator. DnaA inhibits its own gene expression. DnaA binds specifically to the promoter regions of at least 20 operons (56 genes), including itself, sda and dnaB, and probably controls their expression in response to DNA replication inhibition. The sequence is that of Chromosomal replication initiator protein DnaA from Bacillus subtilis (strain 168).